The chain runs to 353 residues: Trans-enoyl reductase eqxC (353 aa).

45-48 (VDTK) is a binding site for NADP(+). Substrate is bound at residue 131 to 138 (ISFMTTGL). NADP(+)-binding positions include 166 to 169 (SSAT), 189 to 192 (SPRN), Y207, and 254 to 255 (LE). Substrate is bound at residue 275–279 (GPQML). Position 344-345 (344-345 (IS)) interacts with NADP(+).

This sequence belongs to the zinc-containing alcohol dehydrogenase family. Monomer.

The catalysed reaction is L-serine + 7 malonyl-CoA + acetyl-CoA + 2 S-adenosyl-L-methionine + ATP + 8 NADPH + 11 H(+) = (5S)-3-[(2E,6R,8E,10E,12E)-2,6-dimethyltetradeca-2,8,10,12-tetraenoyl]-5-(hydroxymethyl)pyrrolidine-2,4-dione + AMP + 2 S-adenosyl-L-homocysteine + 7 CO2 + diphosphate + 8 NADP(+) + 8 CoA + 6 H2O. The protein operates within mycotoxin biosynthesis. In terms of biological role, trans-enoyl reductase; part of the gene cluster that mediates the biosynthesis of equisetin, a trans-fused decalin-containing tetramic acid with antimicrobial activity. The PKS module of eqxS together with the enoylreductase eqxC catalyze the formation of the polyketide unit which is then conjugated to L-serine by the condensation domain of the eqxS NRPS module. Activity of the Dieckmann cyclase domain (RED) results in release of the Dieckmann product intermediate. Diels-Alderase eqx3 is involved in endo-selective Diels-Alder cycloaddition to form the decalin ring, leading to the production of N-desmethylequisetin also called trichosetin. Subsequent N-methylation is carried out by eqxD to give equisetin. The protein is Trans-enoyl reductase eqxC of Fusarium heterosporum.